A 509-amino-acid polypeptide reads, in one-letter code: Heat shock 70 kDa protein 14 (509 aa).

This sequence belongs to the heat shock protein 70 family. In terms of assembly, component of ribosome-associated complex (RAC), a heterodimer composed of Hsp70/DnaK-type chaperone HSPA14 and Hsp40/DnaJ-type chaperone DNAJC2.

The protein localises to the cytoplasm. It localises to the cytosol. In terms of biological role, component of the ribosome-associated complex (RAC), a complex involved in folding or maintaining nascent polypeptides in a folding-competent state. In the RAC complex, binds to the nascent polypeptide chain, while DNAJC2 stimulates its ATPase activity. The sequence is that of Heat shock 70 kDa protein 14 (HSPA14) from Bos taurus (Bovine).